The primary structure comprises 455 residues: Kynurenine 3-monooxygenase (455 aa).

It belongs to the aromatic-ring hydroxylase family. KMO subfamily. Requires FAD as cofactor.

The catalysed reaction is L-kynurenine + NADPH + O2 + H(+) = 3-hydroxy-L-kynurenine + NADP(+) + H2O. It functions in the pathway cofactor biosynthesis; NAD(+) biosynthesis; quinolinate from L-kynurenine: step 1/3. Functionally, catalyzes the hydroxylation of L-kynurenine (L-Kyn) to form 3-hydroxy-L-kynurenine (L-3OHKyn). Required for synthesis of quinolinic acid. This Stenotrophomonas maltophilia (strain K279a) protein is Kynurenine 3-monooxygenase.